Reading from the N-terminus, the 141-residue chain is Putative pre-16S rRNA nuclease (141 aa).

Belongs to the YqgF nuclease family.

It localises to the cytoplasm. Its function is as follows. Could be a nuclease involved in processing of the 5'-end of pre-16S rRNA. The sequence is that of Putative pre-16S rRNA nuclease from Dictyoglomus turgidum (strain DSM 6724 / Z-1310).